Consider the following 282-residue polypeptide: Phosphate import ATP-binding protein PstB (282 aa).

Positions 1-10 (MNMAESHLDP) are enriched in basic and acidic residues. A disordered region spans residues 1-24 (MNMAESHLDPSKLATGPAGAGAAT). Positions 14–24 (ATGPAGAGAAT) are enriched in low complexity. In terms of domain architecture, ABC transporter spans 36-277 (IEVKNLNFFY…PARKETEDYI (242 aa)). ATP is bound at residue 68 to 75 (GPSGCGKS).

Belongs to the ABC transporter superfamily. Phosphate importer (TC 3.A.1.7) family. The complex is composed of two ATP-binding proteins (PstB), two transmembrane proteins (PstC and PstA) and a solute-binding protein (PstS).

Its subcellular location is the cell inner membrane. The catalysed reaction is phosphate(out) + ATP + H2O = ADP + 2 phosphate(in) + H(+). Part of the ABC transporter complex PstSACB involved in phosphate import. Responsible for energy coupling to the transport system. The sequence is that of Phosphate import ATP-binding protein PstB from Burkholderia thailandensis (strain ATCC 700388 / DSM 13276 / CCUG 48851 / CIP 106301 / E264).